A 439-amino-acid chain; its full sequence is tRNA modification GTPase MnmE (439 aa).

Residues Arg-23, Glu-80, and Lys-120 each contribute to the (6S)-5-formyl-5,6,7,8-tetrahydrofolate site. The region spanning 217–365 (GLKIVIAGEP…LLTALQSHLP (149 aa)) is the TrmE-type G domain. Residue Asn-227 participates in K(+) binding. Residues 227–232 (NAGKSS), 246–252 (TEVAGTT), and 271–274 (DTAG) contribute to the GTP site. A Mg(2+)-binding site is contributed by Ser-231. Residues Thr-246, Val-248, and Thr-251 each contribute to the K(+) site. Thr-252 is a Mg(2+) binding site. Lys-439 is a (6S)-5-formyl-5,6,7,8-tetrahydrofolate binding site.

It belongs to the TRAFAC class TrmE-Era-EngA-EngB-Septin-like GTPase superfamily. TrmE GTPase family. As to quaternary structure, homodimer. Heterotetramer of two MnmE and two MnmG subunits. The cofactor is K(+).

It localises to the cytoplasm. In terms of biological role, exhibits a very high intrinsic GTPase hydrolysis rate. Involved in the addition of a carboxymethylaminomethyl (cmnm) group at the wobble position (U34) of certain tRNAs, forming tRNA-cmnm(5)s(2)U34. This Rhizobium meliloti (strain 1021) (Ensifer meliloti) protein is tRNA modification GTPase MnmE.